A 161-amino-acid polypeptide reads, in one-letter code: Cell division protein SepF (161 aa).

The protein belongs to the SepF family. Homodimer. Interacts with FtsZ.

It localises to the cytoplasm. Cell division protein that is part of the divisome complex and is recruited early to the Z-ring. Probably stimulates Z-ring formation, perhaps through the cross-linking of FtsZ protofilaments. Its function overlaps with FtsA. The chain is Cell division protein SepF from Finegoldia magna (strain ATCC 29328 / DSM 20472 / WAL 2508) (Peptostreptococcus magnus).